The following is a 275-amino-acid chain: 2-dehydro-3-deoxyphosphooctonate aldolase (275 aa).

It belongs to the KdsA family.

It localises to the cytoplasm. It catalyses the reaction D-arabinose 5-phosphate + phosphoenolpyruvate + H2O = 3-deoxy-alpha-D-manno-2-octulosonate-8-phosphate + phosphate. Its pathway is carbohydrate biosynthesis; 3-deoxy-D-manno-octulosonate biosynthesis; 3-deoxy-D-manno-octulosonate from D-ribulose 5-phosphate: step 2/3. It functions in the pathway bacterial outer membrane biogenesis; lipopolysaccharide biosynthesis. The protein is 2-dehydro-3-deoxyphosphooctonate aldolase of Francisella philomiragia subsp. philomiragia (strain ATCC 25017 / CCUG 19701 / FSC 153 / O#319-036).